The primary structure comprises 606 residues: DNA ligase (606 aa).

Glu-263 is an ATP binding site. The N6-AMP-lysine intermediate role is filled by Lys-265. 6 residues coordinate ATP: Arg-270, Arg-285, Glu-315, Phe-355, Arg-432, and Lys-438.

Belongs to the ATP-dependent DNA ligase family. The cofactor is Mg(2+). Mn(2+) serves as cofactor.

It catalyses the reaction ATP + (deoxyribonucleotide)n-3'-hydroxyl + 5'-phospho-(deoxyribonucleotide)m = (deoxyribonucleotide)n+m + AMP + diphosphate.. The catalysed reaction is ADP + (deoxyribonucleotide)n-3'-hydroxyl + 5'-phospho-(deoxyribonucleotide)m = (deoxyribonucleotide)n+m + AMP + phosphate.. The enzyme catalyses GTP + (deoxyribonucleotide)n-3'-hydroxyl + 5'-phospho-(deoxyribonucleotide)m = (deoxyribonucleotide)n+m + GMP + diphosphate.. DNA ligase that seals nicks in double-stranded DNA during DNA replication, DNA recombination and DNA repair. Can use ATP, ADP and GTP, but not CTP, TTP or NAD(+). This chain is DNA ligase, found in Sulfophobococcus zilligii.